A 384-amino-acid polypeptide reads, in one-letter code: Lipid-A-disaccharide synthase (384 aa).

The protein belongs to the LpxB family.

It catalyses the reaction a lipid X + a UDP-2-N,3-O-bis[(3R)-3-hydroxyacyl]-alpha-D-glucosamine = a lipid A disaccharide + UDP + H(+). Its pathway is bacterial outer membrane biogenesis; LPS lipid A biosynthesis. Functionally, condensation of UDP-2,3-diacylglucosamine and 2,3-diacylglucosamine-1-phosphate to form lipid A disaccharide, a precursor of lipid A, a phosphorylated glycolipid that anchors the lipopolysaccharide to the outer membrane of the cell. In Geobacter metallireducens (strain ATCC 53774 / DSM 7210 / GS-15), this protein is Lipid-A-disaccharide synthase.